A 78-amino-acid chain; its full sequence is Conotoxin 5 (78 aa).

The signal sequence occupies residues 1 to 22; it reads MKLTCMMIVTVLFLTAWIFITA. Positions 23-49 are excised as a propeptide; that stretch reads DNSRNGIENLPRMRRHEMKNPKASKLN. Cystine bridges form between Cys53–Cys69, Cys60–Cys73, and Cys68–Cys77.

The protein belongs to the conotoxin O1 superfamily. Expressed by the venom duct.

The protein localises to the secreted. The chain is Conotoxin 5 from Conus imperialis (Imperial cone).